The sequence spans 418 residues: Putative ion-transport protein YfeO (418 aa).

12 helical membrane-spanning segments follow: residues 10-30 (LLLSLPAVAIGIASSLILIVV), 54-74 (DSPLWIIGVLTLTGIAVGLVI), 99-119 (ALPGLIVALILGLAGGVSLGP), 120-140 (EHPIMTVNIALAVAIGARLLP), 149-169 (ILASAGTIGALFGTPVAAALI), 186-206 (LFAPLMAAAAGALTTGLFFHP), 223-243 (ILSGAIVAAIAIAAGMVAVWC), 258-278 (VLVLGIGGFILGILGVIGGPV), 300-320 (DYFLLAVIKLAALVVAAASGF), 322-342 (GGRIFPAVFVGVALGLMLHEH), 343-363 (VPAVPAAITVSCAILGIVLVV), and 371-391 (LFMAAVVVPNTTLLPLLCIVM).

It belongs to the chloride channel (TC 2.A.49) family.

Its subcellular location is the cell membrane. The polypeptide is Putative ion-transport protein YfeO (Escherichia coli O9:H4 (strain HS)).